The following is a 202-amino-acid chain: Na(+)-translocating NADH-quinone reductase subunit E (202 aa).

6 helical membrane passes run 11–31 (AVFVENMALAFFLGMCTFIAI), 35–55 (VETAIGLGVAVIVVLGITMPV), 79–99 (LSFLGLLTFIGVIAALVQILE), 114–134 (GVFLPLITVNCAIMGGSLFMV), 144–164 (TVYGIGAGVSWALAIAALAGI), and 180–200 (LGITFITIGLMSLGFMSFSGV).

Belongs to the NqrDE/RnfAE family. Composed of six subunits; NqrA, NqrB, NqrC, NqrD, NqrE and NqrF.

It is found in the cell inner membrane. The enzyme catalyses a ubiquinone + n Na(+)(in) + NADH + H(+) = a ubiquinol + n Na(+)(out) + NAD(+). NQR complex catalyzes the reduction of ubiquinone-1 to ubiquinol by two successive reactions, coupled with the transport of Na(+) ions from the cytoplasm to the periplasm. NqrA to NqrE are probably involved in the second step, the conversion of ubisemiquinone to ubiquinol. This chain is Na(+)-translocating NADH-quinone reductase subunit E, found in Ectopseudomonas mendocina (strain ymp) (Pseudomonas mendocina).